The following is a 192-amino-acid chain: Thymidylate kinase (192 aa).

7-14 (GIDCVGKS) is a binding site for ATP.

It belongs to the thymidylate kinase family.

The enzyme catalyses dTMP + ATP = dTDP + ADP. Functionally, phosphorylation of dTMP to form dTDP in both de novo and salvage pathways of dTTP synthesis. In Campylobacter jejuni subsp. doylei (strain ATCC BAA-1458 / RM4099 / 269.97), this protein is Thymidylate kinase.